The sequence spans 229 residues: Lytic polysaccharide monooxygenase-like protein ham-7 (229 aa).

Residues 1–17 form the signal peptide; the sequence is MLTSTLLALASAALASA. Position 18 (histidine 18) interacts with Cu(2+). Cystine bridges form between cysteine 47/cysteine 157 and cysteine 122/cysteine 178. N-linked (GlcNAc...) asparagine glycosylation is found at asparagine 55, asparagine 98, asparagine 139, asparagine 174, and asparagine 180. The GPI-anchor amidated serine moiety is linked to residue serine 206. Residues 207–229 constitute a propeptide, removed in mature form; sequence AAASLARMAGWVPLVAGGLWLML.

The protein belongs to the X325 family. Cu(2+) is required as a cofactor.

It is found in the cell membrane. Its function is as follows. Lytic polysaccharide monooxygenase-like protein that has diverged to biological functions other than polysaccharide degradation since it does not perform oxidative cleavage of polysaccharides. Acts as the major cell wall sensor that regulates MAK-1-dependent hyphal anastomosis, the fusion of hyphal cells. May also act as a cell surface-bound protein that functions in the copper-accumulation pathway. The polypeptide is Lytic polysaccharide monooxygenase-like protein ham-7 (Neurospora crassa (strain ATCC 24698 / 74-OR23-1A / CBS 708.71 / DSM 1257 / FGSC 987)).